The sequence spans 404 residues: Coenzyme F420H(2) oxidase (404 aa).

Residues H83, E85, D87, H88, H151, D170, and H233 each coordinate Fe cation. Residues 259-399 form the Flavodoxin-like domain; it reads VTVIYDTMHG…ACFEAGRKLA (141 aa). Residues 265–270, 317–320, and 351–356 each bind FMN; these read TMHGST, TIYD, and SMGGNG.

This sequence in the N-terminal section; belongs to the zinc metallo-hydrolase group 3 family. As to quaternary structure, homodimer. Homotetramer. The tetramer is composed of two functional dimers. FMN serves as cofactor. It depends on Fe cation as a cofactor.

It catalyses the reaction 2 reduced coenzyme F420-(gamma-L-Glu)(n) + O2 = 2 oxidized coenzyme F420-(gamma-L-Glu)(n) + 2 H2O + 2 H(+). In terms of biological role, catalyzes the oxidation of F420H(2) with O(2). May be involved in O(2) detoxification, reducing the intracellular O(2) concentration to a level allowing growth at the expense of methane formation. The sequence is that of Coenzyme F420H(2) oxidase from Methanothermobacter marburgensis (strain ATCC BAA-927 / DSM 2133 / JCM 14651 / NBRC 100331 / OCM 82 / Marburg) (Methanobacterium thermoautotrophicum).